A 622-amino-acid chain; its full sequence is MNKLNFHNNRVMQDRRSVCIFLPNDESLNIIINVKILCHQLLVQVCDLLRLKDCHLFGLSVIQNNEHVYMELSQKLYKYCPKEWKKEASKVRQYEVTWGIDQFGPPMIIHFRVQYYVENGRLISDRAARYYYYWHLRKQVLHSQCVLREEAYFLLAAFALQADLGNFKRNKHYGKYFEPEAYFPSWVVSKRGKDYILKHIPNMHKDQFALTASEAHLKYIKEAVRLDDVAVHYYRLYKDKREIEASLTLGLTMRGIQIFQNLDEEKQLLYDFPWTNVGKLVFVGKKFEILPDGLPSARKLIYYTGCPMRSRHLLQLLSNSHRLYMNLQPVLRHIRKLEENEEKKQYRESYISDNLDLDMDQLEKRSRASGSSAGSMKHKRLSRHSTASHSSSHTSGIEADTKPRDTGPEDSYSSSAIHRKLKTCSSMTSHGSSHTSGVESGGKDRLEEDLQDDEIEMLVDDPRDLEQMNEESLEVSPDMCIYITEDMLMSRKLNGHSGLIVKEIGSSTSSSSETVVKLRGQSTDSLPQTICRKPKTSTDRHSLSLDDIRLYQKDFLRIAGLCQDTAQSYTFGCGHELDEEGLYCNSCLAQQCINIQDAFPVKRTSKYFSLDLTHDEVPEFVV.

Positions 16–328 (RSVCIFLPND…NSHRLYMNLQ (313 aa)) constitute an FERM domain. Residues 364 to 445 (KRSRASGSSA…SGVESGGKDR (82 aa)) are disordered. Composition is skewed to low complexity over residues 384-395 (HSTASHSSSHTS) and 425-438 (SSMT…TSGV). Phosphoserine is present on serine 522. A Phosphothreonine modification is found at threonine 523. A phosphoserine mark is found at serine 525, serine 542, and serine 544.

The protein localises to the cytoplasm. It is found in the cell membrane. This is FERM domain-containing protein 6 (FRMD6) from Homo sapiens (Human).